The chain runs to 266 residues: DNA repair protein RecO (266 aa).

It belongs to the RecO family.

Functionally, involved in DNA repair and RecF pathway recombination. This Synechococcus elongatus (strain ATCC 33912 / PCC 7942 / FACHB-805) (Anacystis nidulans R2) protein is DNA repair protein RecO.